The following is a 533-amino-acid chain: 2,3-bisphosphoglycerate-independent phosphoglycerate mutase (533 aa).

Asp-15 and Ser-65 together coordinate Mn(2+). Ser-65 (phosphoserine intermediate) is an active-site residue. Residues His-126, 156–157, Arg-188, Arg-194, 258–261, and Lys-331 each bind substrate; these read RD and RPDR. Asp-398, His-402, Asp-439, His-440, and His-457 together coordinate Mn(2+).

It belongs to the BPG-independent phosphoglycerate mutase family. Monomer. Requires Mn(2+) as cofactor.

It catalyses the reaction (2R)-2-phosphoglycerate = (2R)-3-phosphoglycerate. It functions in the pathway carbohydrate degradation; glycolysis; pyruvate from D-glyceraldehyde 3-phosphate: step 3/5. In terms of biological role, catalyzes the interconversion of 2-phosphoglycerate and 3-phosphoglycerate. This Nostoc sp. (strain PCC 7120 / SAG 25.82 / UTEX 2576) protein is 2,3-bisphosphoglycerate-independent phosphoglycerate mutase.